The primary structure comprises 192 residues: Phosphomevalonate kinase (192 aa).

Residues 17–23 and R141 each bind ATP; that span reads KRKSGKD. A substrate-binding site is contributed by N170. 2 residues coordinate ATP: H171 and Q180.

As to quaternary structure, monomer.

It localises to the cytoplasm. The protein resides in the cytosol. The catalysed reaction is (R)-5-phosphomevalonate + ATP = (R)-5-diphosphomevalonate + ADP. Its pathway is isoprenoid biosynthesis; isopentenyl diphosphate biosynthesis via mevalonate pathway; isopentenyl diphosphate from (R)-mevalonate: step 2/3. In terms of biological role, catalyzes the reversible ATP-dependent phosphorylation of mevalonate 5-phosphate to produce mevalonate diphosphate and ADP, a key step in the mevalonic acid mediated biosynthesis of isopentenyl diphosphate and other polyisoprenoid metabolites. The sequence is that of Phosphomevalonate kinase (Pmvk) from Mus musculus (Mouse).